We begin with the raw amino-acid sequence, 106 residues long: Iron-sulfur cluster assembly protein CyaY (106 aa).

It belongs to the frataxin family.

Functionally, involved in iron-sulfur (Fe-S) cluster assembly. May act as a regulator of Fe-S biogenesis. In Salmonella paratyphi B (strain ATCC BAA-1250 / SPB7), this protein is Iron-sulfur cluster assembly protein CyaY.